Here is an 816-residue protein sequence, read N- to C-terminus: Transcription factor qa-1f (816 aa).

Positions 76 to 103 (CDQCRAAREKCDGIQPACFPCVSQGRSC) form a DNA-binding region, zn(2)-C6 fungal-type. Over residues 184-202 (SGQAAQDPSEDGQSPSEDI) the composition is skewed to polar residues. A disordered region spans residues 184–235 (SGQAAQDPSEDGQSPSEDINVQDAGAKTSDFPHAPHLTFSAPKSSTAETRTL).

Its subcellular location is the nucleus. In terms of biological role, transcription activator; part of the qa gene cluster that mediates the catabolism of quinic acid (QA) and as such, allows the use of QA as a sole carbon source. Activates the expression of qa cluster genes by binding to a 16 base-pair consensus sequence 5'-GGRTAARYRYTTAYCC-3' present in the promoters of the target genes. Regulates its own expression. May regulate the expression of many other genes inclusing genes with products in 8 mutually connected metabolic pathways: (1) starch and sucrose metabolism; (2) glycolysis/glucanogenesis; (3) TCA Cycle; (4) butanoate metabolism; (5) pyruvate metabolism; (6) aromatic amino acid and QA metabolism; (7) valine, leucine, and isoleucine degradation; and (8) transport of sugars and amino acids. The sequence is that of Transcription factor qa-1f from Neurospora crassa (strain ATCC 24698 / 74-OR23-1A / CBS 708.71 / DSM 1257 / FGSC 987).